The sequence spans 149 residues: 3-dehydroquinate dehydratase (149 aa).

Tyr26 serves as the catalytic Proton acceptor. Positions 78, 84, and 91 each coordinate substrate. The active-site Proton donor is His104. Substrate is bound by residues 105-106 and Arg115; that span reads LS.

It belongs to the type-II 3-dehydroquinase family. As to quaternary structure, homododecamer.

The enzyme catalyses 3-dehydroquinate = 3-dehydroshikimate + H2O. It functions in the pathway metabolic intermediate biosynthesis; chorismate biosynthesis; chorismate from D-erythrose 4-phosphate and phosphoenolpyruvate: step 3/7. Catalyzes a trans-dehydration via an enolate intermediate. In Polynucleobacter asymbioticus (strain DSM 18221 / CIP 109841 / QLW-P1DMWA-1) (Polynucleobacter necessarius subsp. asymbioticus), this protein is 3-dehydroquinate dehydratase.